A 76-amino-acid chain; its full sequence is Small ribosomal subunit protein bS18 (76 aa).

This sequence belongs to the bacterial ribosomal protein bS18 family. In terms of assembly, part of the 30S ribosomal subunit. Forms a tight heterodimer with protein bS6.

In terms of biological role, binds as a heterodimer with protein bS6 to the central domain of the 16S rRNA, where it helps stabilize the platform of the 30S subunit. The sequence is that of Small ribosomal subunit protein bS18 from Marinomonas sp. (strain MWYL1).